The primary structure comprises 163 residues: Pheromone-binding protein 1 (163 aa).

Positions Met-1–Ser-21 are cleaved as a signal peptide. 3 cysteine pairs are disulfide-bonded: Cys-40–Cys-75, Cys-71–Cys-129, and Cys-118–Cys-138.

It belongs to the PBP/GOBP family. As to expression, antenna.

In terms of biological role, this major soluble protein in olfactory sensilla of male moths might serve to solubilize the extremely hydrophobic pheromone molecules and to transport pheromone through the aqueous lymph to receptors located on olfactory cilia. The chain is Pheromone-binding protein 1 from Antheraea pernyi (Chinese oak silk moth).